The chain runs to 91 residues: MPRSLKKGPFIDLHLLKKVEAALEANDKRPIKTWSRRSTVFPEMVGLTIAVHNGKQHVPVYVTEDMVGHKLGEFAATRTYRGHAADKKAKR.

This sequence belongs to the universal ribosomal protein uS19 family.

In terms of biological role, protein S19 forms a complex with S13 that binds strongly to the 16S ribosomal RNA. This is Small ribosomal subunit protein uS19 from Marinobacter nauticus (strain ATCC 700491 / DSM 11845 / VT8) (Marinobacter aquaeolei).